The sequence spans 359 residues: Aminomethyltransferase (359 aa).

This sequence belongs to the GcvT family. The glycine cleavage system is composed of four proteins: P, T, L and H.

It catalyses the reaction N(6)-[(R)-S(8)-aminomethyldihydrolipoyl]-L-lysyl-[protein] + (6S)-5,6,7,8-tetrahydrofolate = N(6)-[(R)-dihydrolipoyl]-L-lysyl-[protein] + (6R)-5,10-methylene-5,6,7,8-tetrahydrofolate + NH4(+). In terms of biological role, the glycine cleavage system catalyzes the degradation of glycine. The sequence is that of Aminomethyltransferase from Synechococcus sp. (strain RCC307).